Reading from the N-terminus, the 243-residue chain is tRNA (guanine-N(1)-)-methyltransferase (243 aa).

Residues G113 and 133–138 contribute to the S-adenosyl-L-methionine site; that span reads IGDFVL.

It belongs to the RNA methyltransferase TrmD family. Homodimer.

Its subcellular location is the cytoplasm. The enzyme catalyses guanosine(37) in tRNA + S-adenosyl-L-methionine = N(1)-methylguanosine(37) in tRNA + S-adenosyl-L-homocysteine + H(+). Its function is as follows. Specifically methylates guanosine-37 in various tRNAs. This is tRNA (guanine-N(1)-)-methyltransferase from Bacillus velezensis (strain DSM 23117 / BGSC 10A6 / LMG 26770 / FZB42) (Bacillus amyloliquefaciens subsp. plantarum).